Consider the following 400-residue polypeptide: uncharacterized protein (400 aa).

A compositionally biased stretch (basic and acidic residues) spans 112–126 (SESTAQIEKKPRKPL). The tract at residues 112–151 (SESTAQIEKKPRKPLDSVGLLEGDRNKRKKSPQMNDFNIK) is disordered.

This is an uncharacterized protein from Homo sapiens (Human).